Consider the following 156-residue polypeptide: Small ribosomal subunit protein uS7 (156 aa).

The protein belongs to the universal ribosomal protein uS7 family. Part of the 30S ribosomal subunit. Contacts proteins S9 and S11.

In terms of biological role, one of the primary rRNA binding proteins, it binds directly to 16S rRNA where it nucleates assembly of the head domain of the 30S subunit. Is located at the subunit interface close to the decoding center, probably blocks exit of the E-site tRNA. The sequence is that of Small ribosomal subunit protein uS7 from Picosynechococcus sp. (strain ATCC 27264 / PCC 7002 / PR-6) (Agmenellum quadruplicatum).